The primary structure comprises 157 residues: Small ribosomal subunit protein uS7 (157 aa).

This sequence belongs to the universal ribosomal protein uS7 family. In terms of assembly, part of the 30S ribosomal subunit. Contacts proteins S9 and S11.

In terms of biological role, one of the primary rRNA binding proteins, it binds directly to 16S rRNA where it nucleates assembly of the head domain of the 30S subunit. Is located at the subunit interface close to the decoding center, probably blocks exit of the E-site tRNA. The sequence is that of Small ribosomal subunit protein uS7 from Chloroflexus aggregans (strain MD-66 / DSM 9485).